Reading from the N-terminus, the 363-residue chain is Peroxisomal (S)-2-hydroxyacid oxidase GLO3 (363 aa).

Residues 1–357 form the FMN hydroxy acid dehydrogenase domain; that stretch reads MDQIVNVDEF…TRNHVRTENE (357 aa). FMN is bound by residues 78 to 80, Ser107, 128 to 130, and Thr156; these read PTG and QIY. Position 130 (Tyr130) interacts with a 2-oxocarboxylate. An a 2-oxocarboxylate-binding site is contributed by Arg165. The FMN site is built by Lys228 and Ser250. His252 (proton acceptor) is an active-site residue. Arg255 provides a ligand contact to a 2-oxocarboxylate. Residues 283–287 and 306–307 each bind FMN; these read DGGVR and GR. The Microbody targeting signal signature appears at 361 to 363; it reads SML.

The protein belongs to the FMN-dependent alpha-hydroxy acid dehydrogenase family. Homotetramer. FMN serves as cofactor.

It is found in the peroxisome. It catalyses the reaction a (2S)-2-hydroxycarboxylate + O2 = a 2-oxocarboxylate + H2O2. The catalysed reaction is 2-hydroxy-4-methylpentanoate + O2 = 4-methyl-2-oxopentanoate + H2O2. The enzyme catalyses 2-hydroxyhexanoate + O2 = 2-oxohexanoate + H2O2. It carries out the reaction 2-hydroxyoctanoate + O2 = 2-oxooctanoate + H2O2. Its function is as follows. Oxidase that catalyzes the oxidation of a broad range of 2-hydroxyacids to the corresponding 2-oxoacids, with a reduction of O2 to H2O2. Displays the highest activity with leucic acid (2-hydroxy-4-methylpentanoate) and has intermediate activity with 2-hydroxyhexanoate and 2-hydroxyoctanote. Shows lower activity with 2-hydroxydodecanoate, valic acid, and isoleucic acid and extremely low activity with glycolate and L-lactate. Cannot use 2-hydroxyhexadecanoate or D-lactate as substrates. May be involved in the conversion or degradation of 2-hydroxyacids produced during the metabolism of fatty acids or amino acids. In Arabidopsis thaliana (Mouse-ear cress), this protein is Peroxisomal (S)-2-hydroxyacid oxidase GLO3 (GLO3).